The following is a 454-amino-acid chain: MTEKEHFFWNKLLELAKEELTQATFDYYVLDTKLIKIQDNVATILLEEVKKLFWEKNMQSFILMTGFEVYNSEIKVEYVFDEALVSETKPTLANNDFSNKREQQTPDLPTLNSDLNSKYTFDNFIQGDENRWSVAASLAVADSPGATYNPLFIYGGPGLGKTHLLNAIGNKVLHDNPQARIKYITAENFINEFVLHIRLDKMDELKLKYRHLDVLLIDDIQSLAKKSTQATQEEFFNTFNVLHDNNKQIVLTSDRNPDQLNEMEERLVTRFKWGLTVNITPPDFETRVAILTNKIMDYDYHFPPETIEYLAGQFDSNVRDLEGALKDISLVANVRQLDTITVEVAAEAIRARKIDGPKLTLIPIEDIQSEVGKFYNVTVKEIKATKRTQNIVLARQVAMYLAREMTDNSLPKIGKEFGGRDHSTVLHAYNKIKNMLAQDDSLRIEIDTIKNKIK.

The domain I, interacts with DnaA modulators stretch occupies residues 1–83 (MTEKEHFFWN…IKVEYVFDEA (83 aa)). The segment at 83–113 (ALVSETKPTLANNDFSNKREQQTPDLPTLNS) is domain II. Residues 114–332 (DLNSKYTFDN…GALKDISLVA (219 aa)) are domain III, AAA+ region. Gly158, Gly160, Lys161, and Thr162 together coordinate ATP. The interval 333 to 454 (NVRQLDTITV…EIDTIKNKIK (122 aa)) is domain IV, binds dsDNA.

It belongs to the DnaA family. Oligomerizes as a right-handed, spiral filament on DNA at oriC.

It localises to the cytoplasm. In terms of biological role, plays an essential role in the initiation and regulation of chromosomal replication. ATP-DnaA binds to the origin of replication (oriC) to initiate formation of the DNA replication initiation complex once per cell cycle. Binds the DnaA box (a 9 base pair repeat at the origin) and separates the double-stranded (ds)DNA. Forms a right-handed helical filament on oriC DNA; dsDNA binds to the exterior of the filament while single-stranded (ss)DNA is stabiized in the filament's interior. The ATP-DnaA-oriC complex binds and stabilizes one strand of the AT-rich DNA unwinding element (DUE), permitting loading of DNA polymerase. After initiation quickly degrades to an ADP-DnaA complex that is not apt for DNA replication. Binds acidic phospholipids. This chain is Chromosomal replication initiator protein DnaA, found in Streptococcus thermophilus (strain ATCC BAA-250 / LMG 18311).